The chain runs to 457 residues: Bifunctional protein GlmU (457 aa).

A pyrophosphorylase region spans residues 1-229 (MYNCAIILAA…YEEIMGVNSR (229 aa)). UDP-N-acetyl-alpha-D-glucosamine-binding positions include 8-11 (LAAG), Lys22, Gln73, and 78-79 (GT). Asp103 is a Mg(2+) binding site. UDP-N-acetyl-alpha-D-glucosamine is bound by residues Gly140, Glu155, Asn170, and Asn227. Asn227 lines the Mg(2+) pocket. The tract at residues 230–250 (VQLSEAEIVMRKRINHKHMVN) is linker. The tract at residues 251 to 457 (GVTFIDCEST…WLDKKGLLKK (207 aa)) is N-acetyltransferase. Residues Arg332 and Lys350 each contribute to the UDP-N-acetyl-alpha-D-glucosamine site. His362 acts as the Proton acceptor in catalysis. Residues Tyr365 and Asn376 each coordinate UDP-N-acetyl-alpha-D-glucosamine. Acetyl-CoA-binding positions include 385 to 386 (NY), Ala422, and Arg439.

This sequence in the N-terminal section; belongs to the N-acetylglucosamine-1-phosphate uridyltransferase family. In the C-terminal section; belongs to the transferase hexapeptide repeat family. Homotrimer. Requires Mg(2+) as cofactor.

It is found in the cytoplasm. It carries out the reaction alpha-D-glucosamine 1-phosphate + acetyl-CoA = N-acetyl-alpha-D-glucosamine 1-phosphate + CoA + H(+). The catalysed reaction is N-acetyl-alpha-D-glucosamine 1-phosphate + UTP + H(+) = UDP-N-acetyl-alpha-D-glucosamine + diphosphate. It participates in nucleotide-sugar biosynthesis; UDP-N-acetyl-alpha-D-glucosamine biosynthesis; N-acetyl-alpha-D-glucosamine 1-phosphate from alpha-D-glucosamine 6-phosphate (route II): step 2/2. Its pathway is nucleotide-sugar biosynthesis; UDP-N-acetyl-alpha-D-glucosamine biosynthesis; UDP-N-acetyl-alpha-D-glucosamine from N-acetyl-alpha-D-glucosamine 1-phosphate: step 1/1. It functions in the pathway bacterial outer membrane biogenesis; LPS lipid A biosynthesis. In terms of biological role, catalyzes the last two sequential reactions in the de novo biosynthetic pathway for UDP-N-acetylglucosamine (UDP-GlcNAc). The C-terminal domain catalyzes the transfer of acetyl group from acetyl coenzyme A to glucosamine-1-phosphate (GlcN-1-P) to produce N-acetylglucosamine-1-phosphate (GlcNAc-1-P), which is converted into UDP-GlcNAc by the transfer of uridine 5-monophosphate (from uridine 5-triphosphate), a reaction catalyzed by the N-terminal domain. The protein is Bifunctional protein GlmU of Clostridium botulinum (strain 657 / Type Ba4).